Consider the following 177-residue polypeptide: O-acetyl-ADP-ribose deacetylase (177 aa).

The region spanning Met-1–Gly-175 is the Macro domain. Substrate is bound by residues Asp-11–Ile-12, Asn-25, Gly-33–Asp-35, and Ser-122–Tyr-126. Catalysis depends on Asp-35, which acts as the Proton acceptor.

The protein belongs to the MacroD-type family. YmdB subfamily. Homodimer. Interacts with RNase III.

It catalyses the reaction 3''-O-acetyl-ADP-D-ribose + H2O = ADP-D-ribose + acetate + H(+). It carries out the reaction 2''-O-acetyl-ADP-D-ribose + H2O = ADP-D-ribose + acetate + H(+). Deacetylates O-acetyl-ADP ribose to yield ADP-ribose and free acetate. Down-regulates ribonuclease 3 (RNase III) activity. Acts by interacting directly with the region of the ribonuclease that is required for dimerization/activation. The chain is O-acetyl-ADP-ribose deacetylase from Shigella flexneri serotype 5b (strain 8401).